The chain runs to 119 residues: Holo-[acyl-carrier-protein] synthase (119 aa).

Mg(2+)-binding residues include Asp-8 and Glu-53.

The protein belongs to the P-Pant transferase superfamily. AcpS family. Mg(2+) is required as a cofactor.

It is found in the cytoplasm. The enzyme catalyses apo-[ACP] + CoA = holo-[ACP] + adenosine 3',5'-bisphosphate + H(+). In terms of biological role, transfers the 4'-phosphopantetheine moiety from coenzyme A to a Ser of acyl-carrier-protein. In Petrotoga mobilis (strain DSM 10674 / SJ95), this protein is Holo-[acyl-carrier-protein] synthase.